A 1119-amino-acid chain; its full sequence is Ubiquitin-associated protein 2 (1119 aa).

Residues 1 to 26 (MMTSVSSDHCRGAREKPQISAAQSTQ) form a disordered region. Positions 8-17 (DHCRGAREKP) are enriched in basic and acidic residues. Positions 48-92 (KNDSDFEAKVKQLMEVTGKNQDECIVALHDCNGDVNKAINILLEG) constitute a UBA domain. The stretch at 105-130 (KKKNFAKENSENKENREKKSEKESSR) forms a coiled coil. A compositionally biased stretch (basic and acidic residues) spans 110–130 (AKENSENKENREKKSEKESSR). Disordered stretches follow at residues 110 to 202 (AKEN…YSDS), 385 to 476 (LGQF…SPST), 622 to 736 (VHNR…SSHQ), 853 to 905 (RDGS…VNPA), 937 to 966 (SAKQ…YSTG), 982 to 1020 (GGYA…GSVY), and 1082 to 1119 (HLPQ…YWTN). Position 166 is an omega-N-methylarginine (Arg-166). Over residues 168–182 (KRARGRGFGRGRGRG) the composition is skewed to basic residues. A compositionally biased stretch (low complexity) spans 389–407 (TTTPSTQQNSTSHPTTTTS). A phosphoserine mark is found at Ser-432, Ser-439, Ser-473, and Ser-630. A compositionally biased stretch (low complexity) spans 435 to 447 (LSQLSQRQQHQSQ). The segment covering 651–662 (SQQTLDTPKTTG) has biased composition (polar residues). Positions 663–678 (PPSALPSVSSLPSTTS) are enriched in low complexity. The span at 679–694 (CTALLPSTSQHTGDLT) shows a compositional bias: polar residues. Low complexity-rich tracts occupy residues 695 to 736 (SSPL…SSHQ) and 874 to 900 (SASP…AQQP). Residues 943–957 (VNLSTPTPPFQQASG) show a composition bias toward polar residues. Composition is skewed to low complexity over residues 1002–1011 (GVSVSSSTTG) and 1088–1102 (QSGS…SLQP).

In terms of assembly, may interact with ANXA2.

Its subcellular location is the nucleus. The protein localises to the chromosome. It localises to the cytoplasm. Its function is as follows. Recruits the ubiquitination machinery to RNA polymerase II for polyubiquitination, removal and degradation, when the transcription-coupled nucleotide excision repair (TC-NER) machinery fails to resolve DNA damage. May promote the degradation of ANXA2. This Homo sapiens (Human) protein is Ubiquitin-associated protein 2.